Reading from the N-terminus, the 425-residue chain is MGVSRVLHVEGGTPLKGELRVYPAKNAALPILAASLLTPEPITLVEVPRLRDVEVMLELLAHLGTQYAWEGRTLHLQTPEIKSTHAPYELVGQMRASFIVWGALLARAGEGHVSMPGGCAFGFRPVDQHIKALEALGAEVWEEDGTFHARRTRPLSGRVVFDLPTVGGTEQAMLAVALGGEATLVQAAVEPEVVDLGHFLALLGAEVEGLGSPIVRIKGAPRLKGGTYRIIPDRIEAGTYLLAAAATRGSLTLEGVRPDHLDALLDKLWRSGHRLEVGEDWIRFRATPDPAPFHVEAREYPGFPTDLQPIATAYLATVPGQSTVVDRIYPDRFTHVGELARMGAELYLRDRILTVQGRRLHGAQVKALDIRAGGALVVAALSAEGASEIEGVYFLERGYEHLTERLQALGARVHLRESPVALAAD.

Position 25–26 (K25–N26) interacts with phosphoenolpyruvate. R95 is a binding site for UDP-N-acetyl-alpha-D-glucosamine. C119 functions as the Proton donor in the catalytic mechanism. C119 is subject to 2-(S-cysteinyl)pyruvic acid O-phosphothioketal. Residues R124–Q128, D306, and I328 each bind UDP-N-acetyl-alpha-D-glucosamine.

The protein belongs to the EPSP synthase family. MurA subfamily.

The protein resides in the cytoplasm. It carries out the reaction phosphoenolpyruvate + UDP-N-acetyl-alpha-D-glucosamine = UDP-N-acetyl-3-O-(1-carboxyvinyl)-alpha-D-glucosamine + phosphate. The protein operates within cell wall biogenesis; peptidoglycan biosynthesis. Its function is as follows. Cell wall formation. Adds enolpyruvyl to UDP-N-acetylglucosamine. The polypeptide is UDP-N-acetylglucosamine 1-carboxyvinyltransferase (Thermus thermophilus (strain ATCC 27634 / DSM 579 / HB8)).